A 372-amino-acid chain; its full sequence is Peroxisomal biogenesis factor 3 (372 aa).

The Cytoplasmic portion of the chain corresponds to 1–15 (MLRSMWNFLKRHKKK). Residues 1–45 (MLRSMWNFLKRHKKKCIFLGTVLGGVYILGKYGQKKLREIQEREA) are targeting to peroxisomes. A helical membrane pass occupies residues 16 to 36 (CIFLGTVLGGVYILGKYGQKK). The Peroxisomal segment spans residues 37–116 (LREIQEREAA…LKIISFTRSI (80 aa)). A helical membrane pass occupies residues 117-140 (VAVYSTCMLVVLLRVQLNIIGGYI). The tract at residues 120 to 136 (YSTCMLVVLLRVQLNII) is interaction with PEX19. The Cytoplasmic portion of the chain corresponds to 141–372 (YLDNATVGKN…AFSTPQQLEK (232 aa)).

Belongs to the peroxin-3 family. Interacts with PEX19.

Its subcellular location is the peroxisome membrane. In terms of biological role, involved in peroxisome biosynthesis and integrity. Assembles membrane vesicles before the matrix proteins are translocated. As a docking factor for PEX19, is necessary for the import of peroxisomal membrane proteins in the peroxisomes. This is Peroxisomal biogenesis factor 3 (Pex3) from Rattus norvegicus (Rat).